The following is a 423-amino-acid chain: MKDLTSSDADALIADLGQKARAAAAVLAEASAERKHAALIGAADAILEAEDAILDANAEDMHYAEEKGLSPAMLDRLKLDPARIRAMAEGLRSVAAQADPVGKVLAEWDRPNGLNIRRVATPLGVIGVVYESRPNVTADAAALALKAGNAVILRGGSESLNSSAAIHRALVTGLKQAGLPETAIQMVPTRDREAVAAMLRAQDYIDVIVPRGGKGLVGLVQKEARVPVFAHLEGICHVYADRDADLDKARRVVLNAKTRRTGICGAAECLLIDWQFYTKHGPVLVQDLLDAGVEVRAEGELAKVPGTVPAEPSDFGQEFLDKIIAVKLVDGVEEAIAHIRRHGSGHTESILTENDATAERFFSGLDSAILMRNASTQFADGGEFGMGAEIGIATGKMHARGPVGAEQLTSFKYLVTGDGTIRP.

Belongs to the gamma-glutamyl phosphate reductase family.

It localises to the cytoplasm. It carries out the reaction L-glutamate 5-semialdehyde + phosphate + NADP(+) = L-glutamyl 5-phosphate + NADPH + H(+). It functions in the pathway amino-acid biosynthesis; L-proline biosynthesis; L-glutamate 5-semialdehyde from L-glutamate: step 2/2. Catalyzes the NADPH-dependent reduction of L-glutamate 5-phosphate into L-glutamate 5-semialdehyde and phosphate. The product spontaneously undergoes cyclization to form 1-pyrroline-5-carboxylate. The chain is Gamma-glutamyl phosphate reductase from Paracoccus denitrificans (strain Pd 1222).